The chain runs to 518 residues: Two-component response regulator-like PRR1 (518 aa).

The region spanning 29 to 147 (RILLCDSDPS…ELLNLWTHVW (119 aa)) is the Response regulatory domain. Disordered stretches follow at residues 172–241 (PSDA…PGVM), 266–305 (TPTT…GTDV), and 483–518 (VRQA…SSPE). The segment covering 196–212 (NQETSTSNQHEYESNPS) has biased composition (polar residues). Residues 443–485 (RAAALAKFRLKRKERCFDKKVRYVNRKKLAETRPRVRGQFVRQ) enclose the CCT domain.

The protein belongs to the ARR-like family. As to quaternary structure, interacts with PIL13. Interacts with PIL15.

The protein resides in the nucleus. Functionally, controls photoperiodic flowering response. Seems to be one of the component of the circadian clock. Expression of several members of the ARR-like family is controlled by circadian rhythm. The particular coordinated sequential expression of PRR73, PRR37, PRR95, PRR59 and PPR1 result to circadian waves that may be at the basis of the endogenous circadian clock. The polypeptide is Two-component response regulator-like PRR1 (PRR1) (Oryza sativa subsp. japonica (Rice)).